Here is a 329-residue protein sequence, read N- to C-terminus: DNA-directed RNA polymerase subunit alpha (329 aa).

The segment at 1–235 (MQGSVTEFLK…EQLEAFVDLR (235 aa)) is alpha N-terminal domain (alpha-NTD). Residues 249–329 (FDPILLRPVD…DWPPASIADE (81 aa)) are alpha C-terminal domain (alpha-CTD).

It belongs to the RNA polymerase alpha chain family. Homodimer. The RNAP catalytic core consists of 2 alpha, 1 beta, 1 beta' and 1 omega subunit. When a sigma factor is associated with the core the holoenzyme is formed, which can initiate transcription.

The catalysed reaction is RNA(n) + a ribonucleoside 5'-triphosphate = RNA(n+1) + diphosphate. Functionally, DNA-dependent RNA polymerase catalyzes the transcription of DNA into RNA using the four ribonucleoside triphosphates as substrates. The sequence is that of DNA-directed RNA polymerase subunit alpha from Salmonella choleraesuis (strain SC-B67).